Here is a 490-residue protein sequence, read N- to C-terminus: MAESILDRTINRFWYKLGDDCLSESQFDLMIRLMEESLDGDQIIDLTSLPSDNLQVEQVMTTTEDSISEEESEFLLAIGETSEEESDSGEEPEFEQVRMDRTGGTEIPKEEDGGEPSRYNERKRKTTEDRYFPTQPKTIPGQKQTTMGMLNIDCQANRRTLIDDWAAEIGLIVKTNREDYLDPETILLLMEHKTSGIAKELIRNTRWNRTTGDIIEQVIDAMYTMFLGLNYSDNKVAEKIEEQEKAKIRMTKLQLCDICYLEEFTCDYEKNMYKTELADFPGYINQYLSKIPIIGEKALTRFRHEANGTSIYSLGFAAKIVKEELSKICDLTKKQKKLKKFNKKCCSIGEASVEYGCKKTSKKKYHKRYKKKYKAYKPYKKKKKFRSGKYFKPKEKKGSKQKYCPKGKKDCRCWICNIEGHYANECPNRQSSEKAHILQQAEKLGLQPIEEPYEGVQEVFILEYKEEEEETSTEEDDGSSTSEDSDSESD.

The disordered stretch occupies residues 79–143 (GETSEEESDS…TQPKTIPGQK (65 aa)). Positions 81 to 94 (TSEEESDSGEEPEF) are enriched in acidic residues. Over residues 95–111 (EQVRMDRTGGTEIPKEE) the composition is skewed to basic and acidic residues. A Nuclear localization signal motif is present at residues 122 to 125 (RKRK). The CCHC-type zinc finger occupies 411-428 (CRCWICNIEGHYANECPN). The tract at residues 464–490 (YKEEEEETSTEEDDGSSTSEDSDSESD) is disordered. Residues 465–490 (KEEEEETSTEEDDGSSTSEDSDSESD) are compositionally biased toward acidic residues.

The protein belongs to the caulimoviridae capsid protein family. In terms of assembly, interacts (via nuclear localization signal) with host importin alpha.

Its subcellular location is the virion. The protein localises to the host nucleus. Functionally, self assembles to form an icosahedral capsid, about 50 nm in diameter, nm, composed of 420 subunits of the viral capsid protein. The capsid encapsulates the genomic dsDNA. Following virus entry into host cell, provides nuclear import of the viral genome. Virus particles do not enter the nucleus, but dock at the nuclear membrane through the interaction with host importins. The protein is Capsid protein of Arabidopsis thaliana (Mouse-ear cress).